Reading from the N-terminus, the 363-residue chain is RNA polymerase II holoenzyme cyclin-like subunit (363 aa).

Residues 53–143 (YQMLRLAKNL…IGECEFWLIS (91 aa)) enclose the Cyclin N-terminal domain. A disordered region spans residues 252–312 (TPGGSGSPAM…SPQKEKSKLQ (61 aa)). A compositionally biased stretch (polar residues) spans 265–276 (IQQNPPNQAYQL). Residues 277–298 (TPQQQEMFRQQQMQQQNRQPET) show a composition bias toward low complexity. A compositionally biased stretch (basic and acidic residues) spans 299 to 310 (QAKDSPQKEKSK).

The protein belongs to the cyclin family. Cyclin C subfamily. Component of the SRB8-11 complex, a regulatory module of the Mediator complex.

Its subcellular location is the nucleus. In terms of biological role, component of the SRB8-11 complex. The SRB8-11 complex is a regulatory module of the Mediator complex which is itself involved in regulation of basal and activated RNA polymerase II-dependent transcription. The SRB8-11 complex may be involved in the transcriptional repression of a subset of genes regulated by Mediator. It may inhibit the association of the Mediator complex with RNA polymerase II to form the holoenzyme complex. The SRB8-11 complex phosphorylates the C-terminal domain (CTD) of the largest subunit of RNA polymerase II. This Pyricularia oryzae (strain 70-15 / ATCC MYA-4617 / FGSC 8958) (Rice blast fungus) protein is RNA polymerase II holoenzyme cyclin-like subunit (SSN8).